The primary structure comprises 275 residues: Notch homolog 2 N-terminal-like protein B (275 aa).

Positions Met-1 to Ala-25 are cleaved as a signal peptide. 4 EGF-like domains span residues Leu-26–Gln-63, His-64–Gln-102, Thr-105–Gln-143, and Trp-144–Glu-180. Intrachain disulfides connect Cys-28/Cys-41, Cys-35/Cys-51, Cys-53/Cys-62, Cys-68/Cys-79, Cys-73/Cys-90, Cys-92/Cys-101, Cys-109/Cys-121, Cys-115/Cys-131, Cys-133/Cys-142, Cys-148/Cys-159, Cys-153/Cys-168, Cys-170/Cys-179, Cys-186/Cys-198, Cys-192/Cys-207, Cys-209/Cys-218, Cys-225/Cys-236, and Cys-230/Cys-246. N-linked (GlcNAc...) asparagine glycosylation is present at Asn-46. Asn-155 carries an N-linked (GlcNAc...) asparagine glycan. Residues Asp-182–Asp-219 enclose the EGF-like 5; calcium-binding domain. Residues Leu-221 to Glu-258 form the EGF-like 6 domain.

The protein belongs to the NOTCH family. Interacts with NOTCH2. Interacts with DLL1; the interaction is direct. Expressed in radial glia neural stem cells during cortical development.

Its subcellular location is the secreted. In terms of biological role, human-specific protein that promotes neural progenitor proliferation and evolutionary expansion of the brain neocortex by regulating the Notch signaling pathway. Able to promote neural progenitor self-renewal, possibly by down-regulating neuronal differentiation genes, thereby delaying the differentiation of neuronal progenitors and leading to an overall final increase in neuronal production. Acts by enhancing the Notch signaling pathway via two different mechanisms that probably work in parallel to reach the same effect. Enhances Notch signaling pathway in a non-cell-autonomous manner via direct interaction with NOTCH2. Also promotes Notch signaling pathway in a cell-autonomous manner through inhibition of cis DLL1-NOTCH2 interactions, which promotes neuronal differentiation. The chain is Notch homolog 2 N-terminal-like protein B from Homo sapiens (Human).